Consider the following 352-residue polypeptide: Dolichol-phosphate mannosyltransferase (352 aa).

Over 1–229 (MKVSVIIPTY…HIYRLMKWEG (229 aa)) the chain is Cytoplasmic. GDP-alpha-D-mannose-binding residues include P8, Y10, E12, V37, D39, D89, A90, D91, Q93, R117, V156, K178, R202, and K208. Residues D91 and Q93 each contribute to the Mg(2+) site. Residues D91 and Q93 each coordinate Mn(2+). A helical membrane pass occupies residues 230 to 256 (EIDRIVKFSIVGLSGILVNEGFLWLFV). The Extracellular portion of the chain corresponds to 257-261 (NLGIP). A helical membrane pass occupies residues 262–286 (KEIAVIPAVELSILNNFFWNDIWTF). Topologically, residues 287 to 293 (KDIRRGS) are cytoplasmic. The chain crosses the membrane as a helical span at residues 294-320 (IFSRLLKFHIAALSGAVVNFIVYWILL). Residues 321–325 (FLGIH) lie on the Extracellular side of the membrane. The chain crosses the membrane as a helical span at residues 326–350 (YLIANLVGIVLSFGVRYVINRHVTW). At 351 to 352 (AT) the chain is on the cytoplasmic side.

Belongs to the glycosyltransferase 2 family. It depends on Mg(2+) as a cofactor. The cofactor is Mn(2+). Ca(2+) is required as a cofactor.

The protein localises to the cell membrane. It carries out the reaction a di-trans,poly-cis-dolichyl phosphate + GDP-alpha-D-mannose = a di-trans,poly-cis-dolichyl beta-D-mannosyl phosphate + GDP. It functions in the pathway protein modification; protein glycosylation. Its function is as follows. Transfers mannose from GDP-mannose to dolichol monophosphate to form dolichol phosphate mannose (Dol-P-Man) which is the mannosyl donor in pathways leading to N-glycosylation, glycosyl phosphatidylinositol membrane anchoring, and O-mannosylation of proteins. The polypeptide is Dolichol-phosphate mannosyltransferase (Pyrococcus furiosus (strain ATCC 43587 / DSM 3638 / JCM 8422 / Vc1)).